Reading from the N-terminus, the 556-residue chain is Guanine nucleotide-binding protein-like 3 homolog (556 aa).

A disordered region spans residues Asn-29–Ser-50. The stretch at Lys-58 to Leu-95 forms a coiled coil. Residues Ala-138–Val-317 enclose the CP-type G domain. Residues Asn-184–Asp-187, Gly-266–Ser-273, and Asp-310–Gly-313 contribute to the GTP site. 2 disordered regions span residues Ala-461 to Leu-508 and Lys-525 to Met-556. A compositionally biased stretch (acidic residues) spans Asp-466–Asp-478. The span at Lys-525 to Ala-535 shows a compositional bias: basic residues.

Belongs to the TRAFAC class YlqF/YawG GTPase family.

The protein localises to the nucleus. Functionally, may play a role in regulating cellular proliferation in both germline and somatic tissues. This chain is Guanine nucleotide-binding protein-like 3 homolog, found in Caenorhabditis elegans.